We begin with the raw amino-acid sequence, 117 residues long: Large ribosomal subunit protein bL20c (117 aa).

It belongs to the bacterial ribosomal protein bL20 family.

It is found in the plastid. Its subcellular location is the chloroplast. In terms of biological role, binds directly to 23S ribosomal RNA and is necessary for the in vitro assembly process of the 50S ribosomal subunit. It is not involved in the protein synthesizing functions of that subunit. The protein is Large ribosomal subunit protein bL20c of Chloranthus spicatus (Chulantree).